Here is a 423-residue protein sequence, read N- to C-terminus: MPNTPHTMNLYIKNIAQLVTCQGSEAKHGREAMGQIHTIEGPAAVVIRDGIIAFAGRMADVAPSMTEGCRELDATGRCVLPGFVDSHTHLVFGGYREDEFQWRLAGDSYMSIMERGGGIASTMRATRSESEDELKASARRHLSNMMKMGVTTVEAKSGYGMNLETELKQLRVVRDLQDEQPLDLYSTFMGAHDTAPEYKGRPTEFIEYLCREVLPEVVRQNLAECCDIFTEKGVFDHEQTRRMLTAAKEAGLSVKMHADEIVPFGGAELAAELGCLSADHLLRISDAGIKALAESNTVATLLPCTAFSLRADYAPARKMIDAGCAVALGSDLNPGSCFSASVPLMFALATLYMGMTVEEAITALTINGAAAIGRADTIGSIEPGKKGDLVVLQYPSYKFLSYHFGMNLVEHTVKGGRVVYTNS.

The Fe(3+) site is built by histidine 87 and histidine 89. Histidine 87 and histidine 89 together coordinate Zn(2+). 4-imidazolone-5-propanoate is bound by residues arginine 96, tyrosine 159, and histidine 192. Tyrosine 159 is an N-formimidoyl-L-glutamate binding site. Residue histidine 257 participates in Fe(3+) binding. Position 257 (histidine 257) interacts with Zn(2+). 4-imidazolone-5-propanoate is bound at residue glutamate 260. Aspartate 331 serves as a coordination point for Fe(3+). Aspartate 331 contacts Zn(2+). Residues asparagine 333 and glycine 335 each coordinate N-formimidoyl-L-glutamate. Serine 336 is a binding site for 4-imidazolone-5-propanoate.

The protein belongs to the metallo-dependent hydrolases superfamily. HutI family. It depends on Zn(2+) as a cofactor. Requires Fe(3+) as cofactor.

The protein localises to the cytoplasm. It catalyses the reaction 4-imidazolone-5-propanoate + H2O = N-formimidoyl-L-glutamate. It participates in amino-acid degradation; L-histidine degradation into L-glutamate; N-formimidoyl-L-glutamate from L-histidine: step 3/3. In terms of biological role, catalyzes the hydrolytic cleavage of the carbon-nitrogen bond in imidazolone-5-propanoate to yield N-formimidoyl-L-glutamate. It is the third step in the universal histidine degradation pathway. This is Imidazolonepropionase from Porphyromonas gingivalis (strain ATCC BAA-308 / W83).